Consider the following 687-residue polypeptide: uncharacterized protein (687 aa).

Positions 277 to 295 (SVCSSQSFSSGQSDISMSS) are enriched in low complexity. Disordered regions lie at residues 277–337 (SVCS…QDCD), 342–361 (DTESVANEPEPYSSTMSEMP), and 531–564 (HVEQAGGDYSSSGQKDQKKKRGKRPVSNPPPSLI). Residues 300–313 (NGSSVGNGSLSPMT) show a composition bias toward polar residues.

This is an uncharacterized protein from Caenorhabditis elegans.